We begin with the raw amino-acid sequence, 249 residues long: Zinc finger AN1 and C2H2 domain-containing stress-associated protein 13 (249 aa).

2 AN1-type zinc fingers span residues 7–55 (PDLG…RGDV) and 95–145 (AVKK…KPES). Residues cysteine 13, cysteine 18, cysteine 28, cysteine 31, cysteine 36, histidine 39, histidine 45, cysteine 47, cysteine 101, cysteine 106, cysteine 118, cysteine 121, cysteine 126, histidine 129, histidine 135, and cysteine 137 each contribute to the Zn(2+) site. A disordered region spans residues 194 to 213 (FASGNDGNSEKTQERNGKQN). Positions 201–210 (NSEKTQERNG) are enriched in basic and acidic residues. The C2H2-type zinc finger occupies 220–243 (DVCPKCSRGFRDPVDLLKHIDKDH).

Functionally, may be involved in environmental stress response. This chain is Zinc finger AN1 and C2H2 domain-containing stress-associated protein 13 (SAP13), found in Arabidopsis thaliana (Mouse-ear cress).